A 170-amino-acid chain; its full sequence is Small ribosomal subunit protein uS5 (170 aa).

Positions 16–79 (IEDQLVAINR…EAGKKNMISV (64 aa)) constitute an S5 DRBM domain.

The protein belongs to the universal ribosomal protein uS5 family. Part of the 30S ribosomal subunit. Contacts proteins S4 and S8.

Functionally, with S4 and S12 plays an important role in translational accuracy. In terms of biological role, located at the back of the 30S subunit body where it stabilizes the conformation of the head with respect to the body. This Lactobacillus delbrueckii subsp. bulgaricus (strain ATCC 11842 / DSM 20081 / BCRC 10696 / JCM 1002 / NBRC 13953 / NCIMB 11778 / NCTC 12712 / WDCM 00102 / Lb 14) protein is Small ribosomal subunit protein uS5.